A 690-amino-acid chain; its full sequence is MKKVIINTWHSFVNIPNVVGPDVEKEITRMENGACSSFSGDDDDSASMFEESETENPHARDSFRSNTHGSGQPSQREQYLPGAIALFNVNNSSNKEQEPKEKKKKKKEKKSKPDDKNENKKDPEKKKKKEKDKDKKKKEEKGKDKKEEEKKEVVVIDPSGNTYYNWLFCITLPVMYNWTMIIARACFDELQSDYLEYWLAFDYLSDVVYLLDMFVRTRTGYLEQGLLVKEERKLIDKYKSTFQFKLDVLSVIPTDLLYIKFGWNYPEIRLNRLLRISRMFEFFQRTETRTNYPNIFRISNLVMYIIIIIHWNACVYFSISKAIGFGNDTWVYPDVNDPDFGRLARKYVYSLYWSTLTLTTIGETPPPVRDSEYFFVVADFLIGVLIFATIVGNIGSMISNMNAARAEFQARIDAIKQYMHFRNVSKDMEKRVIKWFDYLWTNKKTVDEREVLKYLPDKLRAEIAINVHLDTLKKVRIFADCEAGLLVELVLKLQPQVYSPGDYICKKGDIGREMYIIKEGKLAVVADDGITQFVVLSDGSYFGEISILNIKGSKAGNRRTANIKSIGYSDLFCLSKDDLMEALTEYPDAKGMLEEKGKQILMKDGLLDINIANAGSDPKDLEEKVTRMESSVDLLQTRFARILAEYESMQQKLKQRLTKVEKFLKPLIDTEFSAIEGSGTESGPTDSTQD.

The Cytoplasmic portion of the chain corresponds to 1–163 (MKKVIINTWH…VVIDPSGNTY (163 aa)). 2 disordered regions span residues 33 to 76 (GACS…PSQR) and 88 to 151 (NVNN…EEKK). Residues 40–54 (GDDDDSASMFEESET) are compositionally biased toward acidic residues. Residues 64-76 (RSNTHGSGQPSQR) show a composition bias toward polar residues. Basic and acidic residues predominate over residues 111 to 151 (SKPDDKNENKKDPEKKKKKEKDKDKKKKEEKGKDKKEEEKK). The helical transmembrane segment at 164 to 185 (YNWLFCITLPVMYNWTMIIARA) threads the bilayer. Over 186 to 195 (CFDELQSDYL) the chain is Extracellular. A helical transmembrane segment spans residues 196 to 215 (EYWLAFDYLSDVVYLLDMFV). The Cytoplasmic portion of the chain corresponds to 216–241 (RTRTGYLEQGLLVKEERKLIDKYKST). A helical membrane pass occupies residues 242 to 251 (FQFKLDVLSV). Residues 252–264 (IPTDLLYIKFGWN) lie on the Extracellular side of the membrane. The chain crosses the membrane as a helical span at residues 265–283 (YPEIRLNRLLRISRMFEFF). Over 284-291 (QRTETRTN) the chain is Cytoplasmic. A helical transmembrane segment spans residues 292–315 (YPNIFRISNLVMYIIIIIHWNACV). Residues 293-402 (PNIFRISNLV…NIGSMISNMN (110 aa)) form an ion conduction pathway region. At 316 to 342 (YFSISKAIGFGNDTWVYPDVNDPDFGR) the chain is on the extracellular side. Asparagine 327 is a glycosylation site (N-linked (GlcNAc...) asparagine). Helical transmembrane passes span 343–373 (LARK…DSEY) and 374–399 (FFVV…SMIS). Positions 360–363 (TIGE) are selectivity filter. Residues 400-690 (NMNAARAEFQ…ESGPTDSTQD (291 aa)) are Cytoplasmic-facing. Residues 403–479 (AARAEFQARI…DTLKKVRIFA (77 aa)) are C-linker. Positions 482 to 603 (EAGLLVELVL…EEKGKQILMK (122 aa)) are cyclic nucleotide-binding domain (CNBD). The 3',5'-cyclic GMP site is built by glycine 543, serine 546, arginine 559, and threonine 560. Arginine 559 and threonine 560 together coordinate 3',5'-cyclic AMP. Residues 621–664 (LEEKVTRMESSVDLLQTRFARILAEYESMQQKLKQRLTKVEKFL) are a coiled coil.

It belongs to the cyclic nucleotide-gated cation channel (TC 1.A.1.5) family. CNGA1 subfamily. Forms a heterotetramer with CNGB1 in a 3:1 ratio. May also form cyclic nucleotide-activated homotetrameric channels, that are efficiently activated by saturating cGMP, but poorly activated by saturating cAMP compared to the heterotetramer with CNGB1. The channel binds Ca(2+)-bound CALM1 via CaM1 and CaM2 regions of the CNGB1 subunit; this interaction modulates the affinity of the channel for cNMPs in response to intracellular Ca(2+) levels. As to expression, expressed in the retina, in rod cells (at protein level).

The protein resides in the cell membrane. It catalyses the reaction Ca(2+)(in) = Ca(2+)(out). The enzyme catalyses Na(+)(in) = Na(+)(out). It carries out the reaction K(+)(in) = K(+)(out). The catalysed reaction is NH4(+)(in) = NH4(+)(out). It catalyses the reaction Rb(+)(in) = Rb(+)(out). The enzyme catalyses Li(+)(in) = Li(+)(out). It carries out the reaction Cs(+)(in) = Cs(+)(out). Pore-forming subunit of the rod cyclic nucleotide-gated channel. Mediates rod photoresponses at dim light converting transient changes in intracellular cGMP levels into electrical signals. In the dark, cGMP levels are high and keep the channel open enabling a steady inward current carried by Na(+) and Ca(2+) ions that leads to membrane depolarization and neurotransmitter release from synaptic terminals. Upon photon absorption cGMP levels decline leading to channel closure and membrane hyperpolarization that ultimately slows neurotransmitter release and signals the presence of light, the end point of the phototransduction cascade. Conducts cGMP- and cAMP-gated ion currents, with permeability for monovalent and divalent cations. The selectivity for Ca(2+) over Na(+) increases with cGMP concentrations, whereas the selectivity among monovalent ions is independent of the cGMP levels. The chain is Cyclic nucleotide-gated channel alpha-1 from Bos taurus (Bovine).